The following is a 637-amino-acid chain: Limonene/alpha-pinene synthase, chloroplastic (637 aa).

Residues 1–56 (MALLSIVSLQVPKSCGLKSLISSSNVQKALCISTAVPTLRMRRRQKALVINMKLTT) constitute a chloroplast transit peptide. Residues Asp-388, Asp-392, and Asp-540 each contribute to the Mg(2+) site. Residues 388–392 (DDMYD) carry the DDXXD motif motif.

This sequence belongs to the terpene synthase family. Tpsd subfamily. Requires Mg(2+) as cofactor. It depends on Mn(2+) as a cofactor. K(+) serves as cofactor.

The protein localises to the plastid. It localises to the chloroplast. It catalyses the reaction (2E)-geranyl diphosphate = (4S)-limonene + diphosphate. The catalysed reaction is (2E)-geranyl diphosphate = (1S,5S)-alpha-pinene + diphosphate. It functions in the pathway terpene metabolism; oleoresin biosynthesis. Its function is as follows. Involved in defensive oleoresin formation in conifers in response to insect attack or other injury. Involved in monoterpene (C10) olefins biosynthesis. The polypeptide is Limonene/alpha-pinene synthase, chloroplastic (ag11) (Abies grandis (Grand fir)).